The sequence spans 603 residues: Multicopper oxidase MCE (603 aa).

The signal sequence occupies residues 1 to 21 (MNTFICSALICLSWLPGFIQA). Positions 30 to 144 (ITYAKGAPDG…YGALWIRPKE (115 aa)) constitute a Plastocyanin-like 1 domain. A glycan (N-linked (GlcNAc...) asparagine) is linked at Asn-75. The Cu cation site is built by His-79, His-81, His-123, and His-125. Residues Asn-155, Asn-180, Asn-235, Asn-256, Asn-272, Asn-275, Asn-388, Asn-394, Asn-413, and Asn-455 are each glycosylated (N-linked (GlcNAc...) asparagine). In terms of domain architecture, Plastocyanin-like 2 spans 173 to 353 (LIVSDWSNFT…TPGDYTIRLP (181 aa)). In terms of domain architecture, Plastocyanin-like 3 spans 450–581 (LLYNPNSTAA…GGMAGVIMDG (132 aa)). Residue His-495 participates in Cu cation binding. Residues Asn-512 and Asn-595 are each glycosylated (N-linked (GlcNAc...) asparagine).

This sequence belongs to the multicopper oxidase family.

It catalyses the reaction 4 monapinone A + O2 = 2 dinapinone A + 2 H2O. It carries out the reaction 4 monapinone E + O2 = 2 dinapinone E + 2 H2O. It participates in secondary metabolite biosynthesis. Its function is as follows. Multicopper oxidase; part of the gene cluster that mediates the biosynthesis of dinapinones DPA1 (or (M)-DPA) and DPA2 (or (P)-DPA), biaryl dihydronaphthopyranones that act in concert as inhibitors of triacylglycerol accumulation in mammalian cells. The first step in the pathway corresponds to the biosynthesis of dihydroxy-decanoyl-CoA by the fungal type I fatty acid synthase (formed by ORF4 and ORF5). The cluster-specific polyketide synthase (ORF7) then accepts and extends dihydroxy-decanoyl-CoA with 6 malonyl-CoA moieties and cyclizes the molecule to produce a putative polyhydroxynaphthopyranone intermediate, which is further methylated by the cluster-specific methyltransferase (ORF1) at 7-OH to produce monapinone A (MPA). MCE catalyzes the regioselective biaryl coupling of monapinone A (MPA) at the 8,8'-positions to afford dimeric atropisomers DPA1 and DPA2 in a ratio of approximately 1:2.5. Monapinone E (MPE) also appears to be a substrate for MCE and provides the atropisomers dinapinones DPE1 (or (M)-DPE) and DPE2 (or (P)-DPE). This chain is Multicopper oxidase MCE, found in Talaromyces pinophilus (Penicillium pinophilum).